The primary structure comprises 241 residues: Phosphoribosylaminoimidazole-succinocarboxamide synthase (241 aa).

Belongs to the SAICAR synthetase family.

The catalysed reaction is 5-amino-1-(5-phospho-D-ribosyl)imidazole-4-carboxylate + L-aspartate + ATP = (2S)-2-[5-amino-1-(5-phospho-beta-D-ribosyl)imidazole-4-carboxamido]succinate + ADP + phosphate + 2 H(+). It functions in the pathway purine metabolism; IMP biosynthesis via de novo pathway; 5-amino-1-(5-phospho-D-ribosyl)imidazole-4-carboxamide from 5-amino-1-(5-phospho-D-ribosyl)imidazole-4-carboxylate: step 1/2. In Lacticaseibacillus casei (strain BL23) (Lactobacillus casei), this protein is Phosphoribosylaminoimidazole-succinocarboxamide synthase.